A 188-amino-acid polypeptide reads, in one-letter code: UPF0488 protein C8orf33 homolog (188 aa).

3 disordered regions span residues 1–65 (MAAP…AEAQ), 87–112 (QRPTPKQKEQALGAIRTLRSQRTPLP), and 144–182 (AHSAQVQPVGEAARKKSRRVCRPRPEGRSKGTSDTRDEE). An N-acetylalanine modification is found at Ala2. At Ser41 the chain carries Phosphoserine. Residues 166 to 182 (PRPEGRSKGTSDTRDEE) are compositionally biased toward basic and acidic residues.

This sequence belongs to the UPF0488 family.

In Bos taurus (Bovine), this protein is UPF0488 protein C8orf33 homolog.